Reading from the N-terminus, the 164-residue chain is FMN reductase (NADH) RutF (164 aa).

This sequence belongs to the non-flavoprotein flavin reductase family. RutF subfamily.

It carries out the reaction FMNH2 + NAD(+) = FMN + NADH + 2 H(+). Its function is as follows. Catalyzes the reduction of FMN to FMNH2 which is used to reduce pyrimidine by RutA via the Rut pathway. The protein is FMN reductase (NADH) RutF of Klebsiella variicola (strain At-22).